The chain runs to 237 residues: Speedy protein E4 (237 aa).

The interval 1-61 (MASGQARPPF…KRKSEWSDES (61 aa)) is disordered.

Belongs to the Speedy/Ringo family. As to expression, predominantly expressed in testis.

This Homo sapiens (Human) protein is Speedy protein E4.